Reading from the N-terminus, the 411-residue chain is MSEFLEGENSKRSIIREIFFDNVKLSYGCTEPVAVGLSVAVGKGYLRGVLKSIDVIMDRNTYKNGLEVGIPGTHLHGFDLAIALAYLVGKPEYGLQVFKDVNSHVLSKAYELKDKIRVSYENSYNLHIKTKLEADNEVLIEITDSHDNISKIVVDGNEIRNTQTSVNFKKDLVKSISLNDIFEYIENPDLDVVNVVKEGIKYNVNAAREGIKKEGNFGYALEEGIPAYVAAGVDERMNGELIPIMTVAGSGNQGIASIVPPTLYGRENEMPEEKIEKAVLLSILVTTYIKAFTGVLTPVCGAGSIASAGSSAAITYLAGGNAEQIKNAINNVLATLFGMTCDGAKRGCALKASIGTQMALNASKLALKDTNIPCGNGFAAKDVEETIRRIELLTKSLRQFDQDVIDFIGHC.

This sequence belongs to the UPF0597 family.

The protein is UPF0597 protein Fnod_1278 of Fervidobacterium nodosum (strain ATCC 35602 / DSM 5306 / Rt17-B1).